The chain runs to 617 residues: Proline--tRNA ligase (617 aa).

The protein belongs to the class-II aminoacyl-tRNA synthetase family. ProS type 1 subfamily. Homodimer.

Its subcellular location is the cytoplasm. It catalyses the reaction tRNA(Pro) + L-proline + ATP = L-prolyl-tRNA(Pro) + AMP + diphosphate. In terms of biological role, catalyzes the attachment of proline to tRNA(Pro) in a two-step reaction: proline is first activated by ATP to form Pro-AMP and then transferred to the acceptor end of tRNA(Pro). As ProRS can inadvertently accommodate and process non-cognate amino acids such as alanine and cysteine, to avoid such errors it has two additional distinct editing activities against alanine. One activity is designated as 'pretransfer' editing and involves the tRNA(Pro)-independent hydrolysis of activated Ala-AMP. The other activity is designated 'posttransfer' editing and involves deacylation of mischarged Ala-tRNA(Pro). The misacylated Cys-tRNA(Pro) is not edited by ProRS. This chain is Proline--tRNA ligase, found in Streptococcus pneumoniae (strain ATCC 700669 / Spain 23F-1).